Here is a 384-residue protein sequence, read N- to C-terminus: Decapping nuclease RAI1 (384 aa).

Glu-168 lines the a divalent metal cation pocket. Position 217 (Glu-217) interacts with substrate. Residues Asp-219, Glu-237, and Leu-238 each contribute to the a divalent metal cation site. The substrate site is built by Lys-239 and Gln-263.

It belongs to the DXO/Dom3Z family. As to quaternary structure, interacts with RAT1; the interaction is direct, stabilizes RAT1 protein structure and stimulates its exoribonuclease activity. The interaction also stimulates RAI1 pyrophosphohydrolase activity, probably by recruiting it to mRNA substrates. Requires a divalent metal cation as cofactor.

The protein resides in the nucleus. It catalyses the reaction a 5'-end NAD(+)-phospho-ribonucleoside in mRNA + H2O = a 5'-end phospho-ribonucleoside in mRNA + NAD(+) + H(+). The enzyme catalyses a 5'-end (N(7)-methyl 5'-triphosphoguanosine)-ribonucleoside-ribonucleotide in mRNA + H2O = a (N(7)-methyl 5'-triphosphoguanosine)-nucleoside + a 5'-end phospho-ribonucleoside in mRNA + H(+). It carries out the reaction a 5'-end triphospho-ribonucleoside in mRNA + H2O = a 5'-end phospho-ribonucleoside in mRNA + diphosphate + H(+). In terms of biological role, decapping enzyme for NAD-capped RNAs: specifically hydrolyzes the nicotinamide adenine dinucleotide (NAD) cap from a subset of RNAs by removing the entire NAD moiety from the 5'-end of an NAD-capped RNA. The NAD-cap is present at the 5'-end of some RNAs and snoRNAs. In contrast to the canonical 5'-end N7 methylguanosine (m7G) cap, the NAD cap promotes mRNA decay. Also acts as a non-canonical decapping enzyme that removes the entire cap structure of m7G capped or incompletely capped RNAs. Has decapping activity toward incomplete 5'-end m7G cap mRNAs such as unmethylated 5'-end-capped RNA (cap0), while it has no activity toward 2'-O-ribose methylated m7G cap (cap1). Also possesses RNA 5'-pyrophosphohydrolase activity by hydrolyzing the 5'-end triphosphate to release pyrophosphates. Stimulates exoribonuclease activity of Rat1, allowing it to degrade RNAs with stable secondary structure more effectively. This is Decapping nuclease RAI1 (RAI1) from Kluyveromyces lactis (strain ATCC 8585 / CBS 2359 / DSM 70799 / NBRC 1267 / NRRL Y-1140 / WM37) (Yeast).